Consider the following 456-residue polypeptide: Esterase MT1326 (456 aa).

LysM domains follow at residues 3–50, 54–101, and 105–152; these read STHA…RLIM, TRYT…RLIM, and TRYT…VLVI. Catalysis depends on residues S294, D391, and H425.

It belongs to the AB hydrolase superfamily.

The protein localises to the secreted. The protein resides in the cell wall. It carries out the reaction a fatty acid ester + H2O = an aliphatic alcohol + a fatty acid + H(+). Its function is as follows. Exhibits lipolytic activity with medium chain length esters as optimum substrates. This is Esterase MT1326 from Mycobacterium tuberculosis (strain CDC 1551 / Oshkosh).